Consider the following 636-residue polypeptide: MCGICCVVALSSQHTICDYFSKDLHCHLRRRGPDSSQQLIKTVSEPSYECFFSGHVLHLRGLMTPQPLEDVNNNIFFWNGEIFNGVHVGDSENDTEVMFRHLALCSSEADILSLFSSLRGPWSFIYYQASGHSLWFGRDYFGRRSLLWQLSNVSDGAFCLTSVSVNSESCNQCQEVPASGIFKMDLRDCATTKSLSLTLFPWKYKCTEKNEEEIFIDVLDQVSKDLPNHITVVMNESKLCLSAPVIPLNRTISEASVEHVSSDSSKTSSVVSLETLQGYLAVEHKRKVVHQFIDVLDEAVKRRVLLLRRGEDEGTGQVQGVSPRKAHVAVLFSGGVDSMVIAALADRHVPLEEPIDLLNVAFMTKEQTKRTGTTKNCIRQEMKLDLHRGEENHKDLDAKMGDDLSCFDVPDRITGRAGLKELEALNPSRTWNFVEINVTLKELKEMRRRFINHLIYPLDTVLDDSIGCAIWFASRGEGYINKQGEMKPYKSPAKVVLTGIGADEQLAGYSRHRICFRKCGPEGLNKELEMELGRISSRNLGRDDRIIGDHGKEARFPFIDEDVVSFLNSLPISEKADLTLPRGVGEKLILRLGAKELGLEAASILPKRAVQFGSRIAKLESNNEKAYHTCSRLKLF.

The active-site Nucleophile is the C2. Residues 2 to 187 enclose the Glutamine amidotransferase type-2 domain; the sequence is CGICCVVALS…ASGIFKMDLR (186 aa). The Asparagine synthetase domain occupies 291–607; sequence QFIDVLDEAV…GLEAASILPK (317 aa).

This is Asparagine synthetase domain-containing protein 1 (ASNSD1) from Gallus gallus (Chicken).